The primary structure comprises 176 residues: B9 domain-containing protein 2 (176 aa).

In terms of domain architecture, C2 B9-type spans 2–118 (AEVHIIGQII…LSPTWRPLGT (117 aa)).

It belongs to the B9D family. As to quaternary structure, part of the tectonic-like complex (also named B9 complex).

It is found in the cytoplasm. The protein resides in the cytoskeleton. The protein localises to the cilium basal body. It localises to the cilium axoneme. In terms of biological role, component of the tectonic-like complex, a complex localized at the transition zone of primary cilia and acting as a barrier that prevents diffusion of transmembrane proteins between the cilia and plasma membranes. The polypeptide is B9 domain-containing protein 2 (b9d2) (Xenopus laevis (African clawed frog)).